A 262-amino-acid chain; its full sequence is Purine nucleoside phosphorylase SSP1584 (262 aa).

Zn(2+) contacts are provided by His-79, Cys-124, and His-141.

It belongs to the purine nucleoside phosphorylase YfiH/LACC1 family. As to quaternary structure, homodimer. Requires Cu(2+) as cofactor. Zn(2+) is required as a cofactor.

It catalyses the reaction adenosine + phosphate = alpha-D-ribose 1-phosphate + adenine. The enzyme catalyses S-methyl-5'-thioadenosine + phosphate = 5-(methylsulfanyl)-alpha-D-ribose 1-phosphate + adenine. The catalysed reaction is inosine + phosphate = alpha-D-ribose 1-phosphate + hypoxanthine. It carries out the reaction adenosine + H2O + H(+) = inosine + NH4(+). Its function is as follows. Purine nucleoside enzyme that catalyzes the phosphorolysis of adenosine and inosine nucleosides, yielding D-ribose 1-phosphate and the respective free bases, adenine and hypoxanthine. Also catalyzes the phosphorolysis of S-methyl-5'-thioadenosine into adenine and S-methyl-5-thio-alpha-D-ribose 1-phosphate. Also has adenosine deaminase activity. The chain is Purine nucleoside phosphorylase SSP1584 from Staphylococcus saprophyticus subsp. saprophyticus (strain ATCC 15305 / DSM 20229 / NCIMB 8711 / NCTC 7292 / S-41).